The sequence spans 160 residues: Transcription elongation factor GreB (160 aa).

The protein belongs to the GreA/GreB family. GreB subfamily.

In terms of biological role, necessary for efficient RNA polymerase transcription elongation past template-encoded arresting sites. The arresting sites in DNA have the property of trapping a certain fraction of elongating RNA polymerases that pass through, resulting in locked ternary complexes. Cleavage of the nascent transcript by cleavage factors such as GreA or GreB allows the resumption of elongation from the new 3'terminus. GreB releases sequences of up to 9 nucleotides in length. This Vibrio vulnificus (strain CMCP6) protein is Transcription elongation factor GreB.